The sequence spans 609 residues: Neutral protease (609 aa).

The first 24 residues, 1–24 (MNKTQRHINWLLAVSAATALPVTA), serve as a signal peptide directing secretion. Positions 25 to 196 (AEMINVNDGS…VLQTWDGLNH (172 aa)) are excised as a propeptide. Residue His-343 coordinates Zn(2+). The active site involves Glu-344. 2 residues coordinate Zn(2+): His-347 and Glu-367. His-426 (proton donor) is an active-site residue.

This sequence belongs to the peptidase M4 family. The cofactor is Zn(2+).

It localises to the secreted. It catalyses the reaction Preferential cleavage of bonds with bulky hydrophobic groups in P2 and P1'. Phe at P1' is the most favored residue, which distinguished this enzyme from thermolysin.. Functionally, extracellular zinc metalloprotease. The chain is Neutral protease (nprV) from Vibrio proteolyticus (Aeromonas proteolytica).